A 314-amino-acid chain; its full sequence is uncharacterized protein (314 aa).

10 consecutive transmembrane segments (helical) span residues 4 to 23 (FFIG…YFSG), 36 to 53 (FNKL…FVSI), 68 to 90 (TLVS…YKFF), 97 to 116 (AAVC…GFAV), 131 to 153 (VAII…LNPS), 174 to 196 (PVVW…PAAW), 200 to 222 (FNLI…LAAH), 229 to 251 (EIAY…VGMA), 261 to 283 (MMVL…RFNV), and 290 to 309 (ASLA…WIYV).

Belongs to the auxin efflux carrier (TC 2.A.69) family.

The protein resides in the cell membrane. This is an uncharacterized protein from Escherichia coli O157:H7.